Here is an 813-residue protein sequence, read N- to C-terminus: Polycomb group protein FERTILIZATION-INDEPENDENT SEED 2 (813 aa).

The disordered stretch occupies residues 1-27 (MARKSIRGKEVVMVSDDDDDDDDVDDD). Residues 15-26 (SDDDDDDDDVDD) are compositionally biased toward acidic residues. A C2H2-type zinc finger spans residues 134–155 (CPFCLIPCGGHEGLQLHLKSSH). 3 disordered regions span residues 197-216 (SPLT…DDSN), 232-261 (DLPR…SEKI), and 274-648 (ESSE…RKEL). Positions 232–246 (DLPRGTENDSTHVND) are enriched in basic and acidic residues. One copy of the A-1 repeat lies at 243–264 (HVNDDNVSSPPRAHSSEKISDI). A 12 X approximate repeat A region spans residues 243–542 (HVNDDNVSSP…HSSKKNKSTR (300 aa)). The B-1 repeat unit spans residues 265 to 281 (LTTTQLAIAESSEPKVP). Residues 265 to 640 (LTTTQLAIAE…KAEPSEPKVT (376 aa)) are 7 X approximate repeat B. The stretch at 282 to 304 (HVNDGNVSSPPRAHSSAEKNEST) is one A-2 repeat. 3 stretches are compositionally biased toward basic and acidic residues: residues 296-307 (SSAEKNESTHVN), 319-331 (HSLE…HVNE), and 344-353 (KKNESTHMND). The A-3 repeat unit spans residues 305–327 (HVNDDDDVSSPPRAHSLEKNEST). The A-4 repeat unit spans residues 328 to 349 (HVNEDNISSPPKAHSSKKNEST). An A-5 repeat occupies 350-371 (HMNDEDVSFPPRTRSSKETSDI). The B-2 repeat unit spans residues 372 to 388 (LTTTQPAIVEPSEPKVR). The segment covering 388–402 (RRGSRRKQLYAKRYK) has biased composition (basic residues). The B-3 repeat unit spans residues 403-419 (ARETQPAIAESSEPKVL). 2 stretches are compositionally biased toward basic and acidic residues: residues 414 to 423 (SEPKVLHVND) and 453 to 462 (SEPKVPHVND). One copy of the A-6 repeat lies at 420–441 (HVNDENVSSPPEAHSLEKASDI). Residues 442–458 (LTTTQPAIAESSEPKVP) form a B-4 repeat. One copy of the A-7 repeat lies at 459-481 (HVNDENVSSTPRAHSSKKNKSTR). Residues 472–481 (HSSKKNKSTR) are compositionally biased toward basic residues. An A-8 repeat occupies 482 to 502 (KNVDNVPSPPKTRSSKKTSDI). A compositionally biased stretch (polar residues) spans 501–512 (DILTTTQPTIAE). The stretch at 503-519 (LTTTQPTIAESSEPKVR) is one B-5 repeat. Residues 514 to 523 (SEPKVRHVND) show a composition bias toward basic and acidic residues. The stretch at 520-542 (HVNDDNVSSTPRAHSSKKNKSTR) is one A-9 repeat. The A-10 repeat unit spans residues 543 to 563 (KNDDNIPSPPKTRSSKKTSNI). The stretch at 564-579 (LTRTQPAIAESEPKVP) is one B-6 repeat. The span at 574–586 (SEPKVPHVNDDKV) shows a compositional bias: basic and acidic residues. Residues 580–601 (HVNDDKVSSTPRAHSSKKNKST) form an A-11 repeat. Over residues 593-602 (HSSKKNKSTH) the composition is skewed to basic residues. The A-12 repeat unit spans residues 602–623 (HKKDDNASLPPKTRSSKKTSDI). The stretch at 624–640 (LATTQPAKAEPSEPKVT) is one B-7 repeat. A VEFS-box region spans residues 648-783 (LHAERCEAKR…CAKTFHKCTT (136 aa)).

It belongs to the VEFS (VRN2-EMF2-FIS2-SU(Z)12) family. Probably indirectly associated with FIE and/or MEA. In plants, PcG complexes are probably composed of a member of the EZ family (CLF or MEA), FIE, and a member of the VEFS family (FIS2, VRN2 or EMF2). Weakly expressed. Expressed in late siliques.

Its subcellular location is the nucleus. Its function is as follows. Polycomb group (PcG) protein. PcG proteins act by forming multiprotein complexes, which are required to maintain the transcriptionally repressive state of homeotic genes throughout development. PcG proteins are not required to initiate repression, but to maintain it during later stages of development. They probably act via the methylation of histones, rendering chromatin heritably changed in its expressibility. Required to prevent the proliferation of the central cell by repressing unknown target genes before fertilization. Regulates the anteroposterior organization of the endosperm. The sequence is that of Polycomb group protein FERTILIZATION-INDEPENDENT SEED 2 from Arabidopsis thaliana (Mouse-ear cress).